A 610-amino-acid chain; its full sequence is Solute carrier family 2, facilitated glucose transporter member 12 (610 aa).

At 1 to 49 the chain is on the cytoplasmic side; it reads MDAPEESIRMTSDPQSKIYVQNPDTHIHLEQGPSAKSGNGRALVLCSVS. Residues 50–70 traverse the membrane as a helical segment; the sequence is VACLSGLLMGYEMSLISGALL. The Extracellular portion of the chain corresponds to 71-84; the sequence is QLRDVLTLSCPEQE. A helical transmembrane segment spans residues 85-105; sequence QVVGSLLLGAFLLSLGGGTIL. Residues 106 to 118 lie on the Cytoplasmic side of the membrane; the sequence is DHYGRRFTIILTA. A helical membrane pass occupies residues 119–139; that stretch reads LLCVLGTLLSVCVVSFWALVV. Over 140–141 the chain is Extracellular; sequence GR. Residues 142 to 162 traverse the membrane as a helical segment; that stretch reads MLVGMSVALSGTASCLYAAEV. Over 163 to 176 the chain is Cytoplasmic; it reads APAAWRGRCVCVYE. The helical transmembrane segment at 177–197 threads the bilayer; sequence LMVVLGMLLGFGLSWAFAGVP. Residues 198–201 are Extracellular-facing; it reads DGWR. Residues 202–222 form a helical membrane-spanning segment; sequence FTFGGALLPALLQAGVMPLLP. At 223–286 the chain is on the cytoplasmic side; that stretch reads DSPRFLLAQQ…FQSRDNMLQR (64 aa). A helical transmembrane segment spans residues 287–307; it reads LLVGAALVFLQQATGQPNILA. The Extracellular segment spans residues 308-325; sequence YASTVLSSVGFHGNEAAT. The chain crosses the membrane as a helical span at residues 326 to 346; sequence LASTGFGVVKVGGTIPAIFLV. The Cytoplasmic portion of the chain corresponds to 347-353; the sequence is DKVGPKA. A helical transmembrane segment spans residues 354–374; sequence LLCVGVVVMMLSTATLGAITM. At 375–475 the chain is on the extracellular side; that stretch reads QSRTHVSSLC…LHEVSPSLKW (101 aa). Residues N392, N429, and N438 are each glycosylated (N-linked (GlcNAc...) asparagine). A helical membrane pass occupies residues 476–496; sequence ISLVSLLVYVAGFSISLGPMV. Topologically, residues 497 to 511 are cytoplasmic; the sequence is HVVLSAIFPTGIRGK. Residues 512 to 532 traverse the membrane as a helical segment; it reads AVSVISAFNWATNLLISMTFL. Residues 533–542 lie on the Extracellular side of the membrane; sequence TLTERIGLPT. Residues 543 to 563 form a helical membrane-spanning segment; the sequence is VIFSYSAMSFLLVVFVIVFVP. Residues 564-610 are Cytoplasmic-facing; sequence ETKGRSLEQISKELAMKNHLRGTLLCHRRKHKATAQPSQEEKALATV.

Belongs to the major facilitator superfamily. Sugar transporter (TC 2.A.1.1) family. Glucose transporter subfamily. In terms of tissue distribution, expressed in the main insulin-sensitive tissues, such as cardiac muscle, skeletal muscle and adipose tissue.

The protein resides in the cell membrane. It is found in the endomembrane system. Its subcellular location is the cytoplasm. It localises to the perinuclear region. It catalyses the reaction D-glucose(out) = D-glucose(in). In terms of biological role, insulin-regulated facilitative glucose transporter. This is Solute carrier family 2, facilitated glucose transporter member 12 from Danio rerio (Zebrafish).